We begin with the raw amino-acid sequence, 335 residues long: Methionine import ATP-binding protein MetN (335 aa).

The ABC transporter domain maps to 2-241; it reads IEFQRLHKSY…PKHVTTRRFV (240 aa). 38-45 is a binding site for ATP; sequence GHSGAGKS.

The protein belongs to the ABC transporter superfamily. Methionine importer (TC 3.A.1.24) family. As to quaternary structure, the complex is composed of two ATP-binding proteins (MetN), two transmembrane proteins (MetI) and a solute-binding protein (MetQ).

It is found in the cell inner membrane. The catalysed reaction is L-methionine(out) + ATP + H2O = L-methionine(in) + ADP + phosphate + H(+). The enzyme catalyses D-methionine(out) + ATP + H2O = D-methionine(in) + ADP + phosphate + H(+). Its function is as follows. Part of the ABC transporter complex MetNIQ involved in methionine import. Responsible for energy coupling to the transport system. This chain is Methionine import ATP-binding protein MetN, found in Xanthomonas oryzae pv. oryzae (strain KACC10331 / KXO85).